The following is a 372-amino-acid chain: Glutamate 5-kinase (372 aa).

K14 is an ATP binding site. The substrate site is built by S54, D141, and N153. ATP-binding positions include 173 to 174 and 215 to 221; these read TD and TGGMATK. Residues 280–358 enclose the PUA domain; it reads RGKLILDQGA…DDIESLLGYD (79 aa).

Belongs to the glutamate 5-kinase family.

The protein localises to the cytoplasm. The enzyme catalyses L-glutamate + ATP = L-glutamyl 5-phosphate + ADP. The protein operates within amino-acid biosynthesis; L-proline biosynthesis; L-glutamate 5-semialdehyde from L-glutamate: step 1/2. Functionally, catalyzes the transfer of a phosphate group to glutamate to form L-glutamate 5-phosphate. This chain is Glutamate 5-kinase, found in Shewanella sediminis (strain HAW-EB3).